Reading from the N-terminus, the 503-residue chain is Cytochrome c-552 (503 aa).

The first 16 residues, 1-16, serve as a signal peptide directing secretion; the sequence is MKKNTIILVGALIAIA. H102 provides a ligand contact to heme c. Heme is bound by residues C130, C133, and K134. Heme c-binding residues include C168, C171, H172, C210, C213, and H214. Ca(2+) is bound by residues E216, Y217, K273, and Q275. Y217 serves as a coordination point for substrate. Residue H276 coordinates substrate. Positions 287, 294, 297, 298, 312, 325, 328, 329, and 404 each coordinate heme c.

The protein belongs to the cytochrome c-552 family. Requires Ca(2+) as cofactor. It depends on heme c as a cofactor.

The protein resides in the periplasm. It carries out the reaction 6 Fe(III)-[cytochrome c] + NH4(+) + 2 H2O = 6 Fe(II)-[cytochrome c] + nitrite + 8 H(+). It participates in nitrogen metabolism; nitrate reduction (assimilation). Functionally, catalyzes the reduction of nitrite to ammonia, consuming six electrons in the process. The protein is Cytochrome c-552 of Maridesulfovibrio salexigens (strain ATCC 14822 / DSM 2638 / NCIMB 8403 / VKM B-1763) (Desulfovibrio salexigens).